A 462-amino-acid chain; its full sequence is Argininosuccinate lyase 2 (462 aa).

Belongs to the lyase 1 family. Argininosuccinate lyase subfamily.

The protein resides in the cytoplasm. It catalyses the reaction 2-(N(omega)-L-arginino)succinate = fumarate + L-arginine. The protein operates within amino-acid biosynthesis; L-arginine biosynthesis; L-arginine from L-ornithine and carbamoyl phosphate: step 3/3. This is Argininosuccinate lyase 2 from Shouchella clausii (strain KSM-K16) (Alkalihalobacillus clausii).